Reading from the N-terminus, the 558-residue chain is Dihydroxy-acid dehydratase (558 aa).

Asp-78 contacts Mg(2+). Cys-119 provides a ligand contact to [2Fe-2S] cluster. Mg(2+) contacts are provided by Asp-120 and Lys-121. Lys-121 is subject to N6-carboxylysine. Position 192 (Cys-192) interacts with [2Fe-2S] cluster. Glu-446 contacts Mg(2+). Ser-472 serves as the catalytic Proton acceptor.

The protein belongs to the IlvD/Edd family. In terms of assembly, homodimer. [2Fe-2S] cluster serves as cofactor. The cofactor is Mg(2+).

It carries out the reaction (2R)-2,3-dihydroxy-3-methylbutanoate = 3-methyl-2-oxobutanoate + H2O. It catalyses the reaction (2R,3R)-2,3-dihydroxy-3-methylpentanoate = (S)-3-methyl-2-oxopentanoate + H2O. The protein operates within amino-acid biosynthesis; L-isoleucine biosynthesis; L-isoleucine from 2-oxobutanoate: step 3/4. It participates in amino-acid biosynthesis; L-valine biosynthesis; L-valine from pyruvate: step 3/4. In terms of biological role, functions in the biosynthesis of branched-chain amino acids. Catalyzes the dehydration of (2R,3R)-2,3-dihydroxy-3-methylpentanoate (2,3-dihydroxy-3-methylvalerate) into 2-oxo-3-methylpentanoate (2-oxo-3-methylvalerate) and of (2R)-2,3-dihydroxy-3-methylbutanoate (2,3-dihydroxyisovalerate) into 2-oxo-3-methylbutanoate (2-oxoisovalerate), the penultimate precursor to L-isoleucine and L-valine, respectively. The sequence is that of Dihydroxy-acid dehydratase from Campylobacter lari (strain RM2100 / D67 / ATCC BAA-1060).